A 359-amino-acid polypeptide reads, in one-letter code: Protein disulfide-isomerase C17H9.14c (359 aa).

Positions 1–19 (MRLPLLSFVIFALFALVFA) are cleaved as a signal peptide. Thioredoxin domains are found at residues 20 to 130 (SGVV…EKTG) and 134 to 250 (RKIV…KKSG). Active-site nucleophile residues include C51 and C54. 2 disulfides stabilise this stretch: C51/C54 and C170/C173.

This sequence belongs to the protein disulfide isomerase family.

It carries out the reaction Catalyzes the rearrangement of -S-S- bonds in proteins.. In terms of biological role, participates in the folding of proteins containing disulfide bonds, may be involved in glycosylation, prolyl hydroxylation and triglyceride transfer. In Schizosaccharomyces pombe (strain 972 / ATCC 24843) (Fission yeast), this protein is Protein disulfide-isomerase C17H9.14c.